The sequence spans 110 residues: Large ribosomal subunit protein uL22 (110 aa).

Belongs to the universal ribosomal protein uL22 family. In terms of assembly, part of the 50S ribosomal subunit.

Functionally, this protein binds specifically to 23S rRNA; its binding is stimulated by other ribosomal proteins, e.g. L4, L17, and L20. It is important during the early stages of 50S assembly. It makes multiple contacts with different domains of the 23S rRNA in the assembled 50S subunit and ribosome. The globular domain of the protein is located near the polypeptide exit tunnel on the outside of the subunit, while an extended beta-hairpin is found that lines the wall of the exit tunnel in the center of the 70S ribosome. The protein is Large ribosomal subunit protein uL22 of Mycoplasma mobile (strain ATCC 43663 / 163K / NCTC 11711) (Mesomycoplasma mobile).